The following is a 336-amino-acid chain: Dihydroorotate dehydrogenase (quinone) (336 aa).

Residues 62–66 (AGLDK) and threonine 86 contribute to the FMN site. Residue lysine 66 coordinates substrate. Substrate is bound at residue 111 to 115 (NRMGF). Residues asparagine 139 and asparagine 172 each contribute to the FMN site. Asparagine 172 lines the substrate pocket. Serine 175 (nucleophile) is an active-site residue. Asparagine 177 provides a ligand contact to substrate. FMN is bound by residues lysine 217 and threonine 245. 246–247 (NT) lines the substrate pocket. Residues glycine 268, glycine 297, and 318–319 (YS) contribute to the FMN site.

It belongs to the dihydroorotate dehydrogenase family. Type 2 subfamily. In terms of assembly, monomer. FMN serves as cofactor.

The protein resides in the cell membrane. The catalysed reaction is (S)-dihydroorotate + a quinone = orotate + a quinol. It participates in pyrimidine metabolism; UMP biosynthesis via de novo pathway; orotate from (S)-dihydroorotate (quinone route): step 1/1. In terms of biological role, catalyzes the conversion of dihydroorotate to orotate with quinone as electron acceptor. This Baumannia cicadellinicola subsp. Homalodisca coagulata protein is Dihydroorotate dehydrogenase (quinone).